The following is a 254-amino-acid chain: Small ribosomal subunit protein uS2 (254 aa).

It belongs to the universal ribosomal protein uS2 family.

The polypeptide is Small ribosomal subunit protein uS2 (Borrelia recurrentis (strain A1)).